A 415-amino-acid chain; its full sequence is Tyrosine--tRNA ligase (415 aa).

The 'HIGH' region motif lies at 54–63 (PTGRDIHLGH). Residues 248–252 (KMSKS) carry the 'KMSKS' region motif. ATP is bound at residue K251. One can recognise an S4 RNA-binding domain in the interval 351 to 415 (AKAFYLLSAI…GKKTFRRLTR (65 aa)).

The protein belongs to the class-I aminoacyl-tRNA synthetase family. TyrS type 2 subfamily. In terms of assembly, homodimer.

It localises to the cytoplasm. It catalyses the reaction tRNA(Tyr) + L-tyrosine + ATP = L-tyrosyl-tRNA(Tyr) + AMP + diphosphate + H(+). In terms of biological role, catalyzes the attachment of tyrosine to tRNA(Tyr) in a two-step reaction: tyrosine is first activated by ATP to form Tyr-AMP and then transferred to the acceptor end of tRNA(Tyr). This is Tyrosine--tRNA ligase from Prochlorococcus marinus (strain MIT 9313).